The following is a 208-amino-acid chain: N-(5'-phosphoribosyl)anthranilate isomerase (208 aa).

This sequence belongs to the TrpF family.

It carries out the reaction N-(5-phospho-beta-D-ribosyl)anthranilate = 1-(2-carboxyphenylamino)-1-deoxy-D-ribulose 5-phosphate. It participates in amino-acid biosynthesis; L-tryptophan biosynthesis; L-tryptophan from chorismate: step 3/5. The protein is N-(5'-phosphoribosyl)anthranilate isomerase of Neisseria gonorrhoeae (strain ATCC 700825 / FA 1090).